The sequence spans 108 residues: Large ribosomal subunit protein eL32 (108 aa).

Residues 21–30 show a composition bias toward basic residues; the sequence is RRPRGRTSKM. Positions 21 to 44 are disordered; sequence RRPRGRTSKMRRYEKGKPAMPAIG.

Belongs to the eukaryotic ribosomal protein eL32 family.

The sequence is that of Large ribosomal subunit protein eL32 (rpl32e) from Methanothermobacter thermautotrophicus (strain ATCC 29096 / DSM 1053 / JCM 10044 / NBRC 100330 / Delta H) (Methanobacterium thermoautotrophicum).